A 312-amino-acid polypeptide reads, in one-letter code: D-alanine--D-alanine ligase (312 aa).

Positions 102-307 (KKIFKMEGIP…FPELTDRLIK (206 aa)) constitute an ATP-grasp domain. An ATP-binding site is contributed by 136–191 (IKEVGVPAVVKANTQGSTIGITFVHVKEKMAEAIESALKYDQDVLVEQFVAGTEVT). 3 residues coordinate Mg(2+): D262, E274, and N276.

It belongs to the D-alanine--D-alanine ligase family. Mg(2+) is required as a cofactor. It depends on Mn(2+) as a cofactor.

The protein localises to the cytoplasm. It catalyses the reaction 2 D-alanine + ATP = D-alanyl-D-alanine + ADP + phosphate + H(+). It participates in cell wall biogenesis; peptidoglycan biosynthesis. In terms of biological role, cell wall formation. This is D-alanine--D-alanine ligase from Desulforamulus reducens (strain ATCC BAA-1160 / DSM 100696 / MI-1) (Desulfotomaculum reducens).